The primary structure comprises 582 residues: 2-succinyl-5-enolpyruvyl-6-hydroxy-3-cyclohexene-1-carboxylate synthase (582 aa).

It belongs to the TPP enzyme family. MenD subfamily. As to quaternary structure, homodimer. Mg(2+) is required as a cofactor. The cofactor is Mn(2+). Thiamine diphosphate serves as cofactor.

The enzyme catalyses isochorismate + 2-oxoglutarate + H(+) = 5-enolpyruvoyl-6-hydroxy-2-succinyl-cyclohex-3-ene-1-carboxylate + CO2. It participates in quinol/quinone metabolism; 1,4-dihydroxy-2-naphthoate biosynthesis; 1,4-dihydroxy-2-naphthoate from chorismate: step 2/7. The protein operates within cofactor biosynthesis; phylloquinone biosynthesis. Functionally, catalyzes the thiamine diphosphate-dependent decarboxylation of 2-oxoglutarate and the subsequent addition of the resulting succinic semialdehyde-thiamine pyrophosphate anion to isochorismate to yield 2-succinyl-5-enolpyruvyl-6-hydroxy-3-cyclohexene-1-carboxylate (SEPHCHC). The sequence is that of 2-succinyl-5-enolpyruvyl-6-hydroxy-3-cyclohexene-1-carboxylate synthase from Trichodesmium erythraeum (strain IMS101).